The following is a 529-amino-acid chain: Delayed-rectifier potassium channel regulatory subunit KCNS1 (529 aa).

The Cytoplasmic segment spans residues 1-217 (MLMLLVRGTH…LTMENPGYSL (217 aa)). A helical transmembrane segment spans residues 218-239 (PSKLFSCVSISVVLASIAAMCI). Residues 240-270 (HSLPEYQAREAAAAVAAVAAGRSPEGVRDDP) lie on the Extracellular side of the membrane. A helical membrane pass occupies residues 271–293 (VLRRLEYFCIAWFSFEVSSRLLL). Over 294 to 304 (APSTRNFFCHP) the chain is Cytoplasmic. A helical transmembrane segment spans residues 305–322 (LNLIDIVSVLPFYLTLLA). The Extracellular segment spans residues 323–340 (GVALGDQGGTGGKELGHL). Residues 341–361 (GKVVQVFRLMRIFRVLKLARH) form a helical; Voltage-sensor membrane-spanning segment. Over 362-376 (STGLRSLGATLKHSY) the chain is Cytoplasmic. Residues 377–398 (REVGILLLYLAVGVSVFSGVAY) form a helical membrane-spanning segment. The Extracellular segment spans residues 399-411 (TAEKEEDVGFNTI). The segment at residues 412–423 (PACWWWGTVSMT) is an intramembrane region (helical). Residues 424-429 (TVGYGD) carry the Selectivity filter motif. The stretch at 424-431 (TVGYGDVV) is an intramembrane region. Residues 432 to 438 (PVTVAGK) are Extracellular-facing. A helical transmembrane segment spans residues 439–467 (LAASGCILGGILVVALPITIIFNKFSHFY). At 468-529 (RRQKALEAAV…PSEPPHPQMY (62 aa)) the chain is on the cytoplasmic side. Residues 496 to 529 (SEASLETSRETSQEGRSADLETQAPSEPPHPQMY) are disordered. A compositionally biased stretch (basic and acidic residues) spans 502–514 (TSRETSQEGRSAD).

It belongs to the potassium channel family. S (TC 1.A.1.2) subfamily. Kv9.1/KCNS1 sub-subfamily. Heterotetramer with KCNB1. Heterotetramer with KCNB2. Does not form homomultimers.

It is found in the cell membrane. Functionally, potassium channel regulatory subunit that modulate the delayed rectifier voltage-gated potassium channel activity of KCNB1 and KCNB2 by altering their kinetics, expression levels, and shifting the half-inactivation potential to more polarized values. While it does not form functional channels on its own, it can form functional heterotetrameric channels with KCNB1 and KCNB2. Each regulatory subunit has unique regulatory properties that can lead to extensive inhibition, significant changes in kinetics, and/or substantial shifts in the voltage dependencies of the inactivation process. The sequence is that of Delayed-rectifier potassium channel regulatory subunit KCNS1 from Papio anubis (Olive baboon).